We begin with the raw amino-acid sequence, 239 residues long: Large ribosomal subunit protein uL1 (239 aa).

This sequence belongs to the universal ribosomal protein uL1 family. Part of the 50S ribosomal subunit.

In terms of biological role, binds directly to 23S rRNA. The L1 stalk is quite mobile in the ribosome, and is involved in E site tRNA release. Its function is as follows. Protein L1 is also a translational repressor protein, it controls the translation of the L11 operon by binding to its mRNA. The chain is Large ribosomal subunit protein uL1 from Acidothermus cellulolyticus (strain ATCC 43068 / DSM 8971 / 11B).